A 400-amino-acid chain; its full sequence is AA13 family lytic polysaccharide monooxygenase A (400 aa).

A signal peptide spans 1–17 (MLLTVLAVVGCFTAVNG). H18 is a binding site for Cu(2+). H18 is subject to Methylhistidine. The 230-residue stretch at 18–247 (HGYLTIPASR…AQVYLHCADI (230 aa)) folds into the Chitin-binding type-4 domain. 7 disulfide bridges follow: C39-C42, C65-C244, C101-C202, C117-C144, C152-C160, C166-C172, and C180-C191. H108 lines the Cu(2+) pocket. N119 carries N-linked (GlcNAc...) asparagine glycosylation. Y241 provides a ligand contact to Cu(2+). Positions 254 to 287 (GGTTSKSTTSTTSTTSTSRSTSTSAPTTTSSAST) are disordered. Low complexity predominate over residues 257–287 (TSKSTTSTTSTTSTSRSTSTSAPTTTSSAST). Residues 293–400 (TTQASLIPVT…TTATAAASWR (108 aa)) form the CBM20 domain. N-linked (GlcNAc...) asparagine glycosylation is present at N379.

Belongs to the polysaccharide monooxygenase AA13 family. It depends on Cu(2+) as a cofactor. Post-translationally, O-mannosylated.

The protein localises to the secreted. The catalysed reaction is starch + reduced acceptor + O2 = D-glucono-1,5-lactone-terminated malto-oligosaccharides + short-chain malto-oligosaccharides + acceptor + H2O.. With respect to regulation, activity is inhibited by both beta-cyclodextrin or amylose that block the access to the active site. Its function is as follows. Starch-active lytic polysaccharide monooxygenase that oxidizes the C1 position of starch substrates. Catalysis by LPMOs requires the reduction of the active-site copper from Cu(II) to Cu(I) by a reducing agent and H(2)O(2) or O(2) as a cosubstrate. The protein is AA13 family lytic polysaccharide monooxygenase A of Aspergillus terreus (strain NIH 2624 / FGSC A1156).